A 520-amino-acid polypeptide reads, in one-letter code: 1,4-alpha-glucan branching enzyme TTHA1902 (520 aa).

The Nucleophile role is filled by Glu184. Substrate contacts are provided by Arg265 and Gly282. Catalysis depends on Asp353, which acts as the Proton donor. Substrate is bound by residues Trp404, Asp460, and Gln469.

This sequence belongs to the glycosyl hydrolase 57 family.

The enzyme catalyses Transfers a segment of a (1-&gt;4)-alpha-D-glucan chain to a primary hydroxy group in a similar glucan chain.. It functions in the pathway glycan biosynthesis; glycogen biosynthesis. Functionally, catalyzes the formation of branch points in alpha-glucans by cleavage of an alpha-1,4 glycosidic bond and subsequent transfer of the cleaved-off oligosaccharide to a new alpha-1,6 position. The branch chain-length distribution of the reaction products shows degree of polymerization (DP) of 3 to 13, with two local maxima at DP 7 and DP 11. Exhibits an alpha-retaining catalytic mechanism. Is involved in glycogen biosynthesis. Shows a secondary activity, i.e. the hydrolysis of the substrate, being 4% of the total activity. Can use amylose as substrate but not alpha-1,4-linked oligosaccharides of 2-7 glucose residues, beta-cyclodextrin, 6-O-glucosyl-beta-cyclodextrin and 6-O-maltosyl-beta-cyclodextrin. Is not able to branch amylopectin further, it only hydrolyzes amylopectin. Thus, displays preference for linear and long substrates (amylose) over branched structures (amylopectin). This Thermus thermophilus (strain ATCC 27634 / DSM 579 / HB8) protein is 1,4-alpha-glucan branching enzyme TTHA1902.